Here is a 350-residue protein sequence, read N- to C-terminus: MLHHMRTIINASWRYGNKCIVRQFGFSQTYSQLKGRDLLTLKNYSAEEIKYLLWVAADLKYRIKEKGEYLPLLQGKSLAMIFEKRSTRTRLSTETGFALLGGHPSFLTTQDIHLGVNESLKDTARVLSGMTDAVLARVYHQSDLEVLAEEASIPIVNGLSDDYHPIQILADYLTIQEHYGHLKGLTISWIGDGNNVLHSIMMSAAKFGMHLHIATPKGYEPNSSLTEAAKQFSKECGTKLLMTNDPLEAANGANVLVTDTWVSMGQEEEKKKRLLDFKGYQITMKTAKLAAPNWIFLHCLPRKPEEVDDEVFYCPKSLVFQEAENRKWTIMGVMVSLLTDYSPQLLRPTF.

A mitochondrion-targeting transit peptide spans 1–30 (MLHHMRTIINASWRYGNKCIVRQFGFSQTY). Carbamoyl phosphate is bound by residues 86–90 (STRTR), Arg-137, and His-164. Arg-137 contacts L-ornithine. Residues Asn-195, 259–263 (DTWVS), 298–301 (HCLP), and Arg-326 contribute to the L-ornithine site. Cys-299 is a catalytic residue. Arg-326 lines the carbamoyl phosphate pocket.

Belongs to the aspartate/ornithine carbamoyltransferase superfamily. OTCase family. As to quaternary structure, homotrimer. In terms of tissue distribution, liver.

The protein localises to the mitochondrion matrix. It catalyses the reaction carbamoyl phosphate + L-ornithine = L-citrulline + phosphate + H(+). It functions in the pathway nitrogen metabolism; urea cycle; L-citrulline from L-ornithine and carbamoyl phosphate: step 1/1. In terms of biological role, OTC is necessary for the tadpoles transition from an ammonotelic, aquatic larva to a ureotelic, terrestrial adult. In Aquarana catesbeiana (American bullfrog), this protein is Ornithine carbamoyltransferase, mitochondrial.